Here is a 354-residue protein sequence, read N- to C-terminus: Guanine nucleotide-binding protein alpha-16 subunit (354 aa).

A lipid anchor (N-myristoyl glycine) is attached at glycine 2. Residue cysteine 3 is the site of S-palmitoyl cysteine attachment. The G-alpha domain occupies 31–354; sequence KTVKLLLLGA…RDNLRTCGLY (324 aa). The segment at 34 to 47 is G1 motif; the sequence is KLLLLGAGESGKST. Residues 39 to 46, 174 to 180, 199 to 203, 268 to 271, and alanine 326 contribute to the GTP site; these read GAGESGKS, LRTRIKT, DVGGQ, and NKKD. Mg(2+)-binding residues include serine 46 and threonine 180. The tract at residues 172–180 is G2 motif; the sequence is DVLRTRIKT. The interval 195–204 is G3 motif; the sequence is FVVFDVGGQR. Positions 264-271 are G4 motif; that stretch reads ILFLNKKD. Residues 324 to 329 are G5 motif; sequence TCATDT.

It belongs to the G-alpha family. As to quaternary structure, g proteins are composed of 3 units; alpha, beta and gamma. The alpha chain contains the guanine nucleotide binding site.

Its function is as follows. Guanine nucleotide-binding proteins (G proteins) are involved as modulators or transducers in various transmembrane signaling systems. In the 1-cell embryo, probably together with goa-1, controls nuclear rotation and spindle elongation during mitosis. During the first embryonic cell divisons, plays a role in gpr-1/2 cortical localization and in the proper orientation of EMS blastomere mitotic spindle. The sequence is that of Guanine nucleotide-binding protein alpha-16 subunit (gpa-16) from Caenorhabditis briggsae.